Consider the following 152-residue polypeptide: Transcriptional regulator MraZ (152 aa).

SpoVT-AbrB domains follow at residues I5 to Q52 and A81 to L124.

It belongs to the MraZ family. In terms of assembly, forms oligomers.

It localises to the cytoplasm. The protein localises to the nucleoid. The protein is Transcriptional regulator MraZ of Legionella pneumophila (strain Paris).